A 356-amino-acid polypeptide reads, in one-letter code: Rhomboid-related protein 1 (356 aa).

A run of 7 helical transmembrane segments spans residues 107 to 129 (WCPP…FFYW), 172 to 194 (YMFL…LVGI), 201 to 223 (KIWR…QYAI), 227 to 249 (SLLV…NVIL), 256 to 275 (LRWI…FGGA), 290 to 312 (HLAH…YNVV), and 319 to 341 (IIRY…FVIV). Residue serine 233 is the Nucleophile of the active site. Residue histidine 293 is part of the active site.

The protein belongs to the peptidase S54 family.

It localises to the membrane. It carries out the reaction Cleaves type-1 transmembrane domains using a catalytic dyad composed of serine and histidine that are contributed by different transmembrane domains.. Its function is as follows. Serine protease which activates lin-3 isoform a in the proximal vulva precursor cells (VPC) during vulva development to transmit the inductive anchor cell signal to the distal VPCs. The polypeptide is Rhomboid-related protein 1 (Caenorhabditis elegans).